The following is a 199-amino-acid chain: Octanoyltransferase (199 aa).

A BPL/LPL catalytic domain is found at 27–199 (SNSCDELWLL…FVQYFLTQFK (173 aa)). Residues 66–73 (RGGQVTYH), 133–135 (SIG), and 146–148 (GIA) each bind substrate. C164 functions as the Acyl-thioester intermediate in the catalytic mechanism.

This sequence belongs to the LipB family.

It is found in the cytoplasm. The enzyme catalyses octanoyl-[ACP] + L-lysyl-[protein] = N(6)-octanoyl-L-lysyl-[protein] + holo-[ACP] + H(+). It participates in protein modification; protein lipoylation via endogenous pathway; protein N(6)-(lipoyl)lysine from octanoyl-[acyl-carrier-protein]: step 1/2. Functionally, catalyzes the transfer of endogenously produced octanoic acid from octanoyl-acyl-carrier-protein onto the lipoyl domains of lipoate-dependent enzymes. Lipoyl-ACP can also act as a substrate although octanoyl-ACP is likely to be the physiological substrate. This chain is Octanoyltransferase, found in Legionella pneumophila (strain Paris).